The sequence spans 602 residues: UvrABC system protein C (602 aa).

Positions 15–92 (DLPGSYQMKD…IQKYQPYYNI (78 aa)) constitute a GIY-YIG domain. Residues 197–232 (GKAKASLTAKMERAAKNLQFERAAEIRDQLHYIEQT) form the UVR domain.

The protein belongs to the UvrC family. In terms of assembly, interacts with UvrB in an incision complex.

Its subcellular location is the cytoplasm. Functionally, the UvrABC repair system catalyzes the recognition and processing of DNA lesions. UvrC both incises the 5' and 3' sides of the lesion. The N-terminal half is responsible for the 3' incision and the C-terminal half is responsible for the 5' incision. The sequence is that of UvrABC system protein C from Lacticaseibacillus paracasei (strain ATCC 334 / BCRC 17002 / CCUG 31169 / CIP 107868 / KCTC 3260 / NRRL B-441) (Lactobacillus paracasei).